A 421-amino-acid polypeptide reads, in one-letter code: Myb-related protein Pp2 (421 aa).

HTH myb-type domains lie at 9–61 (KVGL…TNYL) and 62–116 (RPDL…KKRL). DNA-binding regions (H-T-H motif) lie at residues 37–61 (WRAIPKLAGLLRCGKSCRLRWTNYL) and 89–112 (WSRIAAQLPGRTDNEIKNYWNTRL). A disordered region spans residues 119-240 (QGLDPNTHLP…VTTKSHEDHR (122 aa)). The span at 136 to 147 (DTEDDTDDEGGD) shows a compositional bias: acidic residues.

The protein resides in the nucleus. Its function is as follows. Possible transcription activator. This chain is Myb-related protein Pp2 (PP2), found in Physcomitrium patens (Spreading-leaved earth moss).